Here is a 353-residue protein sequence, read N- to C-terminus: MEDCIKRNQTKKIKVGDIFIGGDSPISVQSMTNTDTRDVKATIHQIKSLEEAGCDIVRLAILDNEAATAIGEIKKHVKIPLVADIHYDYRLAVECMKNGVDKIRLNPGNIGGNDRVRTVAGMAKERGIPIRIGVNSGSVEKRILEKFGGVTAEGMVESALAHVAMLENVDFNDIAISIKASSVPMTIAAYRLLSEKCLYPLHVGVTEAGTVYKGTIKSAVGIGCLLAEGIGDTIRVSLTGDPVEEIKVGKQILKSLDLLKEGIEIVSCPTCGRTQVNLIDIANSIEPLLEKLNKNIKVAIMGCAVNGPGEAKDADIGIAGGVNEVLLFKKGRIIRKIPQENVVEELIKEISEM.

[4Fe-4S] cluster-binding residues include Cys-268, Cys-271, Cys-303, and Glu-310.

Belongs to the IspG family. The cofactor is [4Fe-4S] cluster.

The catalysed reaction is (2E)-4-hydroxy-3-methylbut-2-enyl diphosphate + oxidized [flavodoxin] + H2O + 2 H(+) = 2-C-methyl-D-erythritol 2,4-cyclic diphosphate + reduced [flavodoxin]. It functions in the pathway isoprenoid biosynthesis; isopentenyl diphosphate biosynthesis via DXP pathway; isopentenyl diphosphate from 1-deoxy-D-xylulose 5-phosphate: step 5/6. Its function is as follows. Converts 2C-methyl-D-erythritol 2,4-cyclodiphosphate (ME-2,4cPP) into 1-hydroxy-2-methyl-2-(E)-butenyl 4-diphosphate. This chain is 4-hydroxy-3-methylbut-2-en-1-yl diphosphate synthase (flavodoxin), found in Ruminiclostridium cellulolyticum (strain ATCC 35319 / DSM 5812 / JCM 6584 / H10) (Clostridium cellulolyticum).